Consider the following 915-residue polypeptide: Protein SLFN14 (915 aa).

Over residues 157–167 the composition is skewed to basic residues; that stretch reads AAQRGRRRLHP. Positions 157-176 are disordered; the sequence is AAQRGRRRLHPPRASNSNLQ. Positions 204–389 are required for endoribonuclease activity; sequence ESTHVEFKRF…KVLEFKGALQ (186 aa). The interval 390-569 is required for ribosome binding; the sequence is RHLFPVTQKT…QLGCEFFNLL (180 aa).

In terms of assembly, associates with ribosomes in an ATP-independent manner. Requires Mg(2+) as cofactor. The cofactor is Mn(2+). As to expression, detected in reticulocytes (at protein level).

Its subcellular location is the nucleus. Functionally, shows no ribosome-associated and endoribonuclease activities. Displays polysome-associated endoribonuclease activity towards mRNAs and rRNAs. May play a role in RNA surveillance pathways by recognizing stalled ribosomes and triggering endonucleolytic cleavage of aberrant mRNAs. Cleaves RNAs in a magnesium-, manganese-dependent and ATP-independent manner. Involved in correct maturation of megakaryocytes and especially important for proplatelet extension. The chain is Protein SLFN14 from Oryctolagus cuniculus (Rabbit).